A 171-amino-acid chain; its full sequence is Serine acetyltransferase (171 aa).

The protein belongs to the transferase hexapeptide repeat family.

Its subcellular location is the cytoplasm. It catalyses the reaction L-serine + acetyl-CoA = O-acetyl-L-serine + CoA. The protein operates within amino-acid biosynthesis; L-cysteine biosynthesis; L-cysteine from L-serine: step 1/2. The protein is Serine acetyltransferase (cysE) of Helicobacter pylori (strain J99 / ATCC 700824) (Campylobacter pylori J99).